The following is a 124-amino-acid chain: MPEPAKAAPKKGSKKAVTKTAGKGGKKRKRTRKESYAIYVYKVLKQVHPDTGISSKAMGIMNSFVNDIFERIAGEASRLAHYNKRSTITSREIQTAVRLLLPGELAKHAVSEGTKAVTKYTSSK.

The disordered stretch occupies residues 1–32 (MPEPAKAAPKKGSKKAVTKTAGKGGKKRKRTR). An N6-acetyllysine mark is found at Lys6 and Lys11. Over residues 8–17 (APKKGSKKAV) the composition is skewed to basic residues. Position 13 is a phosphoserine (Ser13). 2 positions are modified to N6-acetyllysine: Lys14 and Lys19. Ser111 carries O-linked (GlcNAc) serine glycosylation. A Glycyl lysine isopeptide (Lys-Gly) (interchain with G-Cter in ubiquitin) cross-link involves residue Lys119.

Belongs to the histone H2B family. As to quaternary structure, the nucleosome is a histone octamer containing two molecules each of H2A, H2B, H3 and H4 assembled in one H3-H4 heterotetramer and two H2A-H2B heterodimers. The octamer wraps approximately 147 bp of DNA. In terms of processing, monoubiquitination of Lys-119 by the BRE1 gives a specific tag for epigenetic transcriptional activation and is also prerequisite for histone H3 'Lys-4' and 'Lys-79' methylation. Post-translationally, phosphorylated during apoptosis; which facilitates apoptotic chromatin condensation. GlcNAcylation at Ser-111 promotes monoubiquitination of Lys-119. It fluctuates in response to extracellular glucose, and associates with transcribed genes.

It localises to the nucleus. The protein localises to the chromosome. Its function is as follows. Core component of nucleosome. Nucleosomes wrap and compact DNA into chromatin, limiting DNA accessibility to the cellular machineries which require DNA as a template. Histones thereby play a central role in transcription regulation, DNA repair, DNA replication and chromosomal stability. DNA accessibility is regulated via a complex set of post-translational modifications of histones, also called histone code, and nucleosome remodeling. This Danio rerio (Zebrafish) protein is Histone H2B 1/2.